The sequence spans 349 residues: Twinfilin-2 (349 aa).

Position 2 is an N-acetylalanine (A2). ADF-H domains lie at 4–139 (QTGI…KHLS) and 177–313 (GLAF…DEVH). Position 14 is an N6-acetyllysine (K14). Y309 is subject to Phosphotyrosine. Residues 322–349 (AFAKPKGPGGKRGHKRLIRGPGENGEDS) form a disordered region. A compositionally biased stretch (basic residues) spans 330-339 (GGKRGHKRLI). Position 349 is a phosphoserine (S349).

This sequence belongs to the actin-binding proteins ADF family. Twinfilin subfamily. Interacts with G-actin; ADP-actin form and capping protein (CP). Isoform 2 interacts (via its N-terminal ADF-H domain) with G-actin (ADP-bound form) with significantly higher affinity than isoform 1. May also be able to interact with TWF1 and phosphoinositides, PI(4,5)P2. When bound to PI(4,5)P2, it is down-regulated. Interacts with MYO7A. In terms of processing, phosphorylated on both serine/threonine and tyrosine. Isoform 1 is ubiquitously expressed (at protein level). Isoform 2 expression is restricted to heart and skeletal muscle where it is the predominant form.

It is found in the cytoplasm. The protein resides in the cytoskeleton. Its subcellular location is the perinuclear region. It localises to the cell projection. The protein localises to the stereocilium. Its function is as follows. Actin-binding protein involved in motile and morphological processes. Inhibits actin polymerization, likely by sequestering G-actin. By capping the barbed ends of filaments, it also regulates motility. Seems to play an important role in clathrin-mediated endocytosis and distribution of endocytic organelles. May play a role in regulating the mature length of the middle and short rows of stereocilia. This chain is Twinfilin-2 (Twf2), found in Mus musculus (Mouse).